The following is a 344-amino-acid chain: N-acetyl-gamma-glutamyl-phosphate reductase (344 aa).

Cysteine 150 is an active-site residue.

It belongs to the NAGSA dehydrogenase family. Type 1 subfamily.

The protein localises to the cytoplasm. It carries out the reaction N-acetyl-L-glutamate 5-semialdehyde + phosphate + NADP(+) = N-acetyl-L-glutamyl 5-phosphate + NADPH + H(+). Its pathway is amino-acid biosynthesis; L-arginine biosynthesis; N(2)-acetyl-L-ornithine from L-glutamate: step 3/4. Functionally, catalyzes the NADPH-dependent reduction of N-acetyl-5-glutamyl phosphate to yield N-acetyl-L-glutamate 5-semialdehyde. The protein is N-acetyl-gamma-glutamyl-phosphate reductase of Pseudomonas syringae pv. syringae (strain B728a).